A 574-amino-acid polypeptide reads, in one-letter code: Adenine deaminase (574 aa).

It belongs to the metallo-dependent hydrolases superfamily. Adenine deaminase family. Mn(2+) serves as cofactor.

The enzyme catalyses adenine + H2O + H(+) = hypoxanthine + NH4(+). This is Adenine deaminase from Thermosipho melanesiensis (strain DSM 12029 / CIP 104789 / BI429).